A 70-amino-acid polypeptide reads, in one-letter code: Probable protein transport protein Sec61 subunit gamma (70 aa).

The Cytoplasmic portion of the chain corresponds to 1 to 39; the sequence is MADQIQEILDVPREFLKDGIQFIKKCQKPDRREFIKISQ. Residues 40–58 form a helical membrane-spanning segment; sequence AVGTGFLIMGAVGYLVKLI. The Extracellular portion of the chain corresponds to 59–70; sequence HIPLNQVLVGGA.

This sequence belongs to the SecE/SEC61-gamma family. As to quaternary structure, heterotrimeric complex composed of SEC61-alpha, SEC61-beta and SEC61-gamma.

The protein localises to the endoplasmic reticulum membrane. Necessary for protein translocation in the endoplasmic reticulum. This is Probable protein transport protein Sec61 subunit gamma from Neurospora crassa (strain ATCC 24698 / 74-OR23-1A / CBS 708.71 / DSM 1257 / FGSC 987).